Reading from the N-terminus, the 315-residue chain is Methionyl-tRNA formyltransferase (315 aa).

Positions serine 2–aspartate 189 are N-terminal domain. Serine 113–proline 116 is a (6S)-5,6,7,8-tetrahydrofolate binding site. Residues lysine 210–alanine 315 are C-terminal domain.

It belongs to the Fmt family.

It catalyses the reaction L-methionyl-tRNA(fMet) + (6R)-10-formyltetrahydrofolate = N-formyl-L-methionyl-tRNA(fMet) + (6S)-5,6,7,8-tetrahydrofolate + H(+). In terms of biological role, attaches a formyl group to the free amino group of methionyl-tRNA(fMet). The formyl group appears to play a dual role in the initiator identity of N-formylmethionyl-tRNA by promoting its recognition by IF2 and preventing the misappropriation of this tRNA by the elongation apparatus. This is Methionyl-tRNA formyltransferase from Salmonella choleraesuis (strain SC-B67).